The primary structure comprises 173 residues: Inorganic pyrophosphatase (173 aa).

Lys-26, Arg-40, and Tyr-52 together coordinate substrate. Positions 62, 67, and 99 each coordinate Mg(2+). Tyr-138 is a binding site for substrate.

This sequence belongs to the PPase family. As to quaternary structure, homohexamer. Mg(2+) is required as a cofactor.

Its subcellular location is the cytoplasm. The catalysed reaction is diphosphate + H2O = 2 phosphate + H(+). Its function is as follows. Catalyzes the hydrolysis of inorganic pyrophosphate (PPi) forming two phosphate ions. The chain is Inorganic pyrophosphatase from Sulfolobus acidocaldarius (strain ATCC 33909 / DSM 639 / JCM 8929 / NBRC 15157 / NCIMB 11770).